Consider the following 101-residue polypeptide: Small ribosomal subunit protein bS18c (101 aa).

The protein belongs to the bacterial ribosomal protein bS18 family. Part of the 30S ribosomal subunit.

Its subcellular location is the plastid. It localises to the chloroplast. The polypeptide is Small ribosomal subunit protein bS18c (Oenothera biennis (German evening primrose)).